A 200-amino-acid polypeptide reads, in one-letter code: Phospholipase A2 inhibitor gamma subunit B (200 aa).

Residues 1–19 (MKFLLFCCLFGTFLATGMC) form the signal peptide. Intrachain disulfides connect Cys22–Cys46, Cys25–Cys32, Cys39–Cys67, Cys73–Cys94, Cys95–Cys100, Cys120–Cys145, Cys138–Cys165, and Cys171–Cys191.

Belongs to the CNF-like-inhibitor family. Heteromer composed of subunit A and subunit B.

The protein resides in the secreted. Functionally, inhibits the enzymatic activity of the phospholipase A2 (PLA2). The polypeptide is Phospholipase A2 inhibitor gamma subunit B (Elaphe climacophora (Japanese rat snake)).